The chain runs to 431 residues: Glutamate-1-semialdehyde 2,1-aminomutase (431 aa).

At K269 the chain carries N6-(pyridoxal phosphate)lysine.

This sequence belongs to the class-III pyridoxal-phosphate-dependent aminotransferase family. HemL subfamily. As to quaternary structure, homodimer. Pyridoxal 5'-phosphate serves as cofactor.

It localises to the cytoplasm. The enzyme catalyses (S)-4-amino-5-oxopentanoate = 5-aminolevulinate. It participates in porphyrin-containing compound metabolism; protoporphyrin-IX biosynthesis; 5-aminolevulinate from L-glutamyl-tRNA(Glu): step 2/2. This Francisella tularensis subsp. mediasiatica (strain FSC147) protein is Glutamate-1-semialdehyde 2,1-aminomutase.